Reading from the N-terminus, the 413-residue chain is Multidrug resistance protein MdtA (413 aa).

An N-terminal signal peptide occupies residues M1–A20. Disordered stretches follow at residues S31–P57 and P392–A413. A compositionally biased stretch (basic and acidic residues) spans A397–A413.

Belongs to the membrane fusion protein (MFP) (TC 8.A.1) family. Part of a tripartite efflux system composed of MdtA, MdtB and MdtC.

The protein resides in the cell inner membrane. This Salmonella heidelberg (strain SL476) protein is Multidrug resistance protein MdtA.